The following is a 458-amino-acid chain: Protein amnionless (458 aa).

Residues 1–19 form the signal peptide; that stretch reads MGALGRALLWLQLCALARA. Residues 20 to 366 lie on the Extracellular side of the membrane; that stretch reads AYKLWVPTTD…LGSGSRAGLA (347 aa). Asparagine 35 carries N-linked (GlcNAc...) asparagine glycosylation. 6 disulfides stabilise this stretch: cysteine 43–cysteine 96, cysteine 137–cysteine 213, cysteine 205–cysteine 211, cysteine 223–cysteine 249, cysteine 234–cysteine 250, and cysteine 239–cysteine 253. The interval 67 to 87 is interaction with CUBN; the sequence is SDMLLPRDGEFVLASGAGFGA. Residues 203–254 enclose the VWFC domain; the sequence is GACADPSGCVCGDAEVQPWICAALLQPLGGRCPPAACPDALRPEGQCCDLCG. The chain crosses the membrane as a helical span at residues 367-387; the sequence is GGVAAGLLLLLLALAAGLLLL. At 388–458 the chain is on the cytoplasmic side; that stretch reads RRAPRLRWTK…VNPLFAEAEA (71 aa). The segment at 422 to 446 is disordered; that stretch reads SVGPVPRTPQPPPAQQAGSSSTSRS.

In terms of assembly, interacts (via extracellular region) with CUBN/cubilin. This gives rise to a huge complex containing one AMN chain and three CUBN chains. In terms of processing, N-glycosylated. A soluble form arises by proteolytic removal of the membrane anchor. As to expression, detected in kidney (at protein level). Detected in kidney and ileum.

The protein localises to the apical cell membrane. It is found in the cell membrane. It localises to the endosome membrane. Its subcellular location is the membrane. The protein resides in the coated pit. The protein localises to the secreted. Membrane-bound component of the endocytic receptor formed by AMN and CUBN. Required for normal CUBN glycosylation and trafficking to the cell surface. The complex formed by AMN and CUBN is required for efficient absorption of vitamin B12. Required for normal CUBN-mediated protein transport in the kidney. The sequence is that of Protein amnionless (AMN) from Canis lupus familiaris (Dog).